A 314-amino-acid polypeptide reads, in one-letter code: Periplasmic [NiFe] hydrogenase small subunit (314 aa).

The segment at residues 1-49 (MNFSVGLGRDDAEKRLVQNGVSRRDFMKFCATVAAAMGMGPAFAPKVAE) is a signal peptide (tat-type signal). [4Fe-4S] cluster contacts are provided by cysteine 67, cysteine 70, cysteine 164, cysteine 197, histidine 234, cysteine 237, cysteine 262, and cysteine 268. 3 residues coordinate [3Fe-4S] cluster: cysteine 277, cysteine 295, and cysteine 298.

Belongs to the [NiFe]/[NiFeSe] hydrogenase small subunit family. In terms of assembly, heterodimer of a large and a small subunit. The cofactor is [4Fe-4S] cluster. [3Fe-4S] cluster serves as cofactor. Post-translationally, predicted to be exported by the Tat system. The position of the signal peptide cleavage has been experimentally proven.

Its subcellular location is the periplasm. The catalysed reaction is 2 Fe(III)-[cytochrome c3] + H2 = 2 Fe(II)-[cytochrome c3] + 2 H(+). Its function is as follows. Involved in hydrogen uptake for the anaerobic reduction of sulfate to hydrogen sulfide in an electron transport chain. Cytochrome c3 is the physiological electron acceptor. The chain is Periplasmic [NiFe] hydrogenase small subunit (hydA) from Solidesulfovibrio fructosivorans (Desulfovibrio fructosivorans).